We begin with the raw amino-acid sequence, 464 residues long: Mothers against decapentaplegic homolog 5 (464 aa).

The MH1 domain occupies 13-137; that stretch reads PAVKRLLGWK…YKRVESPVLP (125 aa). Residues Cys65, Cys110, Cys122, and His127 each contribute to the Zn(2+) site. The disordered stretch occupies residues 166-258; the sequence is HMPLNATFPE…LAPQNMPRGD (93 aa). Polar residues predominate over residues 173–183; it reads FPESFQQHSGG. Positions 199–216 are enriched in low complexity; that stretch reads ASSGTYPNSPASSGPSSP. A compositionally biased stretch (polar residues) spans 237-251; sequence QDGSQSMETGSSLAP. An MH2 domain is found at 270-464; the sequence is WCSIVYYELN…SPLNPISSVS (195 aa).

Belongs to the dwarfin/SMAD family. In terms of assembly, may form trimers with the co-SMAD SMAD4.

Its subcellular location is the cytoplasm. It localises to the nucleus. Functionally, involved in ventralization. May mediate Bmp2b signaling during early phases of embryonic dorsal-ventral pattern formation. Required for initiation of Smad1 expression during gastrulation. The chain is Mothers against decapentaplegic homolog 5 (smad5) from Danio rerio (Zebrafish).